The chain runs to 269 residues: Energy-coupling factor transporter ATP-binding protein EcfA1 (269 aa).

One can recognise an ABC transporter domain in the interval 8 to 242 (IVFKNVSFQY…AEGLTTIGLD (235 aa)). Residue 42-49 (GHNGSGKS) participates in ATP binding.

Belongs to the ABC transporter superfamily. Energy-coupling factor EcfA family. As to quaternary structure, forms a stable energy-coupling factor (ECF) transporter complex composed of 2 membrane-embedded substrate-binding proteins (S component), 2 ATP-binding proteins (A component) and 2 transmembrane proteins (T component).

Its subcellular location is the cell membrane. Its function is as follows. ATP-binding (A) component of a common energy-coupling factor (ECF) ABC-transporter complex. Unlike classic ABC transporters this ECF transporter provides the energy necessary to transport a number of different substrates. In Staphylococcus aureus (strain bovine RF122 / ET3-1), this protein is Energy-coupling factor transporter ATP-binding protein EcfA1.